A 533-amino-acid chain; its full sequence is (E)-beta-farnesene synthase (533 aa).

Asp-286, Asp-290, Asn-430, Ser-434, and Glu-438 together coordinate Mg(2+). Residues 286–290 carry the DDXXD motif motif; sequence DDMMD.

Belongs to the terpene synthase family. Mg(2+) serves as cofactor. Requires Co(2+) as cofactor. It depends on Mn(2+) as a cofactor.

The protein resides in the cytoplasm. The enzyme catalyses (2E,6E)-farnesyl diphosphate = (E)-beta-farnesene + diphosphate. It participates in secondary metabolite biosynthesis; terpenoid biosynthesis. Its function is as follows. Sesquiterpene cyclase catalyzing the production of beta-farnesene and alpha-bergamotene in equal amounts from farnesyl diphosphate. Involved in indirect defense by producing volatile signals attracting natural enemies of herbivores. This chain is (E)-beta-farnesene synthase, found in Zea mays subsp. huehuetenangensis (San Antonio Huista teosinte).